The chain runs to 147 residues: Holdfast attachment protein A (147 aa).

Its function is as follows. Involved in attachment of the holdfast to the cell. The holdfast is a structure that allows the bacteria to firmly adheres to surfaces. This Caulobacter vibrioides (strain ATCC 19089 / CIP 103742 / CB 15) (Caulobacter crescentus) protein is Holdfast attachment protein A (hfaA).